The primary structure comprises 273 residues: Large ribosomal subunit protein uL2 (273 aa).

Residues 222-273 (GVAMNPVDHPMGGGEGRSSGGRHPCTPWGVPTKGYRTRKSKRSDKLIVHRRK) form a disordered region. Over residues 264–273 (SDKLIVHRRK) the composition is skewed to basic and acidic residues.

It belongs to the universal ribosomal protein uL2 family. In terms of assembly, part of the 50S ribosomal subunit. Forms a bridge to the 30S subunit in the 70S ribosome.

Functionally, one of the primary rRNA binding proteins. Required for association of the 30S and 50S subunits to form the 70S ribosome, for tRNA binding and peptide bond formation. It has been suggested to have peptidyltransferase activity; this is somewhat controversial. Makes several contacts with the 16S rRNA in the 70S ribosome. This chain is Large ribosomal subunit protein uL2, found in Syntrophobacter fumaroxidans (strain DSM 10017 / MPOB).